A 207-amino-acid polypeptide reads, in one-letter code: 8-oxoguanine DNA glycosylase/AP lyase (207 aa).

Residues K129 and D147 contribute to the active site.

This sequence belongs to the type-2 OGG1 family.

The enzyme catalyses 2'-deoxyribonucleotide-(2'-deoxyribose 5'-phosphate)-2'-deoxyribonucleotide-DNA = a 3'-end 2'-deoxyribonucleotide-(2,3-dehydro-2,3-deoxyribose 5'-phosphate)-DNA + a 5'-end 5'-phospho-2'-deoxyribonucleoside-DNA + H(+). In terms of biological role, catalyzes the excision of an oxidatively damaged form of guanine (7,8-dihydro-8-oxoguanine = 8-oxoG) from DNA. Also cleaves the DNA backbone at apurinic/apyrimidinic sites (AP sites). Has little specificity for the base opposite oxoG. This Methanocaldococcus jannaschii (strain ATCC 43067 / DSM 2661 / JAL-1 / JCM 10045 / NBRC 100440) (Methanococcus jannaschii) protein is 8-oxoguanine DNA glycosylase/AP lyase.